Here is a 165-residue protein sequence, read N- to C-terminus: MRDFTHFNEQGRAKMVDISEKSITERTAVAKSSVEVNKEIYEKIIGGKIRKGDVLAVAQIAGVMAAKNTSQWIPMCHPLSLTGVDISFEWEETRNHYLLHIEASVKTTGRTGVEMEALTAASATALTVYDMCKAIDKGMVIGPTYLVKKTGGVHGDFERSSSQKS.

Substrate is bound by residues 75–77 (MCH) and 115–116 (ME). Aspartate 130 is a catalytic residue.

Belongs to the MoaC family. As to quaternary structure, homohexamer; trimer of dimers.

The enzyme catalyses (8S)-3',8-cyclo-7,8-dihydroguanosine 5'-triphosphate = cyclic pyranopterin phosphate + diphosphate. It functions in the pathway cofactor biosynthesis; molybdopterin biosynthesis. Functionally, catalyzes the conversion of (8S)-3',8-cyclo-7,8-dihydroguanosine 5'-triphosphate to cyclic pyranopterin monophosphate (cPMP). The chain is Cyclic pyranopterin monophosphate synthase from Halalkalibacterium halodurans (strain ATCC BAA-125 / DSM 18197 / FERM 7344 / JCM 9153 / C-125) (Bacillus halodurans).